Consider the following 342-residue polypeptide: MEAVQQNHSVCRGYCGVMLRSRSGGFFRRGFMLGNVEVILARPRGFCAGVERAVRTLESVASRYAGTREVYALHEIVHNLHVVNSFKKMGVKFVSALHEVPEGAVLVFSAHGVSQQIKEESRRKGLTVVDATCPLVTKVHLEIQRYDKSGYQVILVGHKGHREVEGSMGQVSNPVVLVQNVQDVQSIKTPSAAKLAYVTQTTLSMDDTAEIINALKLRFPQIVGPDLRDICYATQNRQTAVKAMSQMVDVVLAIGSKNSSNSNRLLDLAKAQNARAYLIDSYRNIDLEWLIGARRIGITAGASAPEILVQEVIDYLGLHANLKVRTMDGVSENITFKLPELD.

[4Fe-4S] cluster is bound at residue Cys47. Residues His78 and His111 each contribute to the (2E)-4-hydroxy-3-methylbut-2-enyl diphosphate site. Residues His78 and His111 each contribute to the dimethylallyl diphosphate site. Positions 78 and 111 each coordinate isopentenyl diphosphate. Cys133 lines the [4Fe-4S] cluster pocket. His161 is a (2E)-4-hydroxy-3-methylbut-2-enyl diphosphate binding site. His161 is a dimethylallyl diphosphate binding site. Residue His161 coordinates isopentenyl diphosphate. Glu163 acts as the Proton donor in catalysis. A (2E)-4-hydroxy-3-methylbut-2-enyl diphosphate-binding site is contributed by Thr201. Cys231 lines the [4Fe-4S] cluster pocket. 4 residues coordinate (2E)-4-hydroxy-3-methylbut-2-enyl diphosphate: Ser259, Ser260, Asn261, and Ser303. Ser259, Ser260, Asn261, and Ser303 together coordinate dimethylallyl diphosphate. Residues Ser259, Ser260, Asn261, and Ser303 each contribute to the isopentenyl diphosphate site.

The protein belongs to the IspH family. It depends on [4Fe-4S] cluster as a cofactor.

The enzyme catalyses isopentenyl diphosphate + 2 oxidized [2Fe-2S]-[ferredoxin] + H2O = (2E)-4-hydroxy-3-methylbut-2-enyl diphosphate + 2 reduced [2Fe-2S]-[ferredoxin] + 2 H(+). It carries out the reaction dimethylallyl diphosphate + 2 oxidized [2Fe-2S]-[ferredoxin] + H2O = (2E)-4-hydroxy-3-methylbut-2-enyl diphosphate + 2 reduced [2Fe-2S]-[ferredoxin] + 2 H(+). Its pathway is isoprenoid biosynthesis; dimethylallyl diphosphate biosynthesis; dimethylallyl diphosphate from (2E)-4-hydroxy-3-methylbutenyl diphosphate: step 1/1. It participates in isoprenoid biosynthesis; isopentenyl diphosphate biosynthesis via DXP pathway; isopentenyl diphosphate from 1-deoxy-D-xylulose 5-phosphate: step 6/6. In terms of biological role, catalyzes the conversion of 1-hydroxy-2-methyl-2-(E)-butenyl 4-diphosphate (HMBPP) into a mixture of isopentenyl diphosphate (IPP) and dimethylallyl diphosphate (DMAPP). Acts in the terminal step of the DOXP/MEP pathway for isoprenoid precursor biosynthesis. This Anaplasma marginale (strain Florida) protein is 4-hydroxy-3-methylbut-2-enyl diphosphate reductase.